We begin with the raw amino-acid sequence, 156 residues long: MRIHIIAVGRLRAGPEKDLIGDYLTRFARSGRALGLGPARVVEVEDRKNGGMGNEAALLRRAIPDGALIAVLDERGRVESSPDFAQRLAGWRDQGRGDLALVIGGADGIDPALRAEADFALSLGKMVWPHMLVRVMLAEQLYRAASILAGAPYHRN.

S-adenosyl-L-methionine is bound by residues L72, G104, and 123-128 (LGKMVW).

It belongs to the RNA methyltransferase RlmH family. Homodimer.

Its subcellular location is the cytoplasm. It carries out the reaction pseudouridine(1915) in 23S rRNA + S-adenosyl-L-methionine = N(3)-methylpseudouridine(1915) in 23S rRNA + S-adenosyl-L-homocysteine + H(+). Functionally, specifically methylates the pseudouridine at position 1915 (m3Psi1915) in 23S rRNA. The polypeptide is Ribosomal RNA large subunit methyltransferase H (Roseobacter denitrificans (strain ATCC 33942 / OCh 114) (Erythrobacter sp. (strain OCh 114))).